The following is a 115-amino-acid chain: Ribonuclease P protein component (115 aa).

It belongs to the RnpA family. As to quaternary structure, consists of a catalytic RNA component (M1 or rnpB) and a protein subunit.

The enzyme catalyses Endonucleolytic cleavage of RNA, removing 5'-extranucleotides from tRNA precursor.. Its function is as follows. RNaseP catalyzes the removal of the 5'-leader sequence from pre-tRNA to produce the mature 5'-terminus. It can also cleave other RNA substrates such as 4.5S RNA. The protein component plays an auxiliary but essential role in vivo by binding to the 5'-leader sequence and broadening the substrate specificity of the ribozyme. This chain is Ribonuclease P protein component, found in Bacillus cereus (strain ATCC 10987 / NRS 248).